The chain runs to 222 residues: Charged multivesicular body protein 2a (222 aa).

Met1 is modified (N-acetylmethionine). Residues 12–53 are a coiled coil; the sequence is EELLRQNQRALNRAMRELDRERQKLETQEKKIIADIKKMAKQ. The interval 56-222 is interaction with VPS4B; that stretch reads MDAVRIMAKD…EERLKNLRRD (167 aa). At Ser184 the chain carries Phosphoserine. Thr185 carries the phosphothreonine modification. Phosphoserine occurs at positions 188, 190, and 203. Residues 195–222 adopt a coiled-coil conformation; the sequence is GKKAEAAASALADADADLEERLKNLRRD. Positions 210–220 match the MIT-interacting motif motif; it reads ADLEERLKNLR. The segment at 217–222 is interaction with VTA1; sequence KNLRRD.

Belongs to the SNF7 family. Probable core component of the endosomal sorting required for transport complex III (ESCRT-III). ESCRT-III components are thought to multimerize to form a flat lattice on the perimeter membrane of the endosome. Several assembly forms of ESCRT-III may exist that interact and act sequentially. In vitro, heteromerizes with CHMP3 (but not CHMP4) to form helical tubular structures that expose membrane-interacting sites on the outside whereas VPS4B can associate on the inside of the tubule. Interacts with CHMP1B, CHMP2B, CHMP3, CHMP4A, CHMP4B, CHMP4C and CHMP5. Interacts with VPS4A; the interaction is direct. Interacts with VPS4B; the interaction is direct. Interacts with MITD1. Interacts with VTA1; the interaction probably involves the open conformation of CHMP2A. ISGylated in a CHMP5-dependent manner. Isgylation weakens and inhibits its interactions with VPS4A and VTA1 respectively.

It is found in the late endosome membrane. It localises to the nucleus envelope. Probable core component of the endosomal sorting required for transport complex III (ESCRT-III) which is involved in multivesicular bodies (MVBs) formation and sorting of endosomal cargo proteins into MVBs. MVBs contain intraluminal vesicles (ILVs) that are generated by invagination and scission from the limiting membrane of the endosome and mostly are delivered to lysosomes enabling degradation of membrane proteins, such as stimulated growth factor receptors, lysosomal enzymes and lipids. The MVB pathway appears to require the sequential function of ESCRT-O, -I,-II and -III complexes. ESCRT-III proteins mostly dissociate from the invaginating membrane before the ILV is released. The ESCRT machinery also functions in topologically equivalent membrane fission events, such as the terminal stages of cytokinesis. Together with SPAST, the ESCRT-III complex promotes nuclear envelope sealing and mitotic spindle disassembly during late anaphase. Recruited to the reforming nuclear envelope (NE) during anaphase by LEMD2. ESCRT-III proteins are believed to mediate the necessary vesicle extrusion and/or membrane fission activities, possibly in conjunction with the AAA ATPase VPS4. In terms of biological role, (Microbial infection) The ESCRT machinery functions in topologically equivalent membrane fission events, such as the budding of enveloped viruses (HIV-1 and other lentiviruses). Involved in HIV-1 p6- and p9-dependent virus release. The protein is Charged multivesicular body protein 2a (CHMP2A) of Homo sapiens (Human).